Reading from the N-terminus, the 340-residue chain is Ketol-acid reductoisomerase (NADP(+)) (340 aa).

In terms of domain architecture, KARI N-terminal Rossmann spans 3–182; it reads VQMEYEKDVK…GAARVGLLET (180 aa). NADP(+) is bound by residues 26–29, Arg-49, Ser-53, and 83–86; these read YGSQ and DEIQ. Residue His-108 is part of the active site. Gly-134 lines the NADP(+) pocket. One can recognise a KARI C-terminal knotted domain in the interval 183–328; sequence TYKEETEEDL…AELRKAMPFV (146 aa). The Mg(2+) site is built by Asp-191, Glu-195, Glu-227, and Glu-231. Residue Ser-252 coordinates substrate.

This sequence belongs to the ketol-acid reductoisomerase family. Requires Mg(2+) as cofactor.

The enzyme catalyses (2R)-2,3-dihydroxy-3-methylbutanoate + NADP(+) = (2S)-2-acetolactate + NADPH + H(+). The catalysed reaction is (2R,3R)-2,3-dihydroxy-3-methylpentanoate + NADP(+) = (S)-2-ethyl-2-hydroxy-3-oxobutanoate + NADPH + H(+). It participates in amino-acid biosynthesis; L-isoleucine biosynthesis; L-isoleucine from 2-oxobutanoate: step 2/4. The protein operates within amino-acid biosynthesis; L-valine biosynthesis; L-valine from pyruvate: step 2/4. Involved in the biosynthesis of branched-chain amino acids (BCAA). Catalyzes an alkyl-migration followed by a ketol-acid reduction of (S)-2-acetolactate (S2AL) to yield (R)-2,3-dihydroxy-isovalerate. In the isomerase reaction, S2AL is rearranged via a Mg-dependent methyl migration to produce 3-hydroxy-3-methyl-2-ketobutyrate (HMKB). In the reductase reaction, this 2-ketoacid undergoes a metal-dependent reduction by NADPH to yield (R)-2,3-dihydroxy-isovalerate. This Streptococcus thermophilus (strain CNRZ 1066) protein is Ketol-acid reductoisomerase (NADP(+)).